The following is a 257-amino-acid chain: NAD-capped RNA hydrolase NudC (257 aa).

Arginine 69 contributes to the substrate binding site. Cysteine 98 and cysteine 101 together coordinate Zn(2+). Substrate is bound at residue glutamate 111. Cysteine 116 and cysteine 119 together coordinate Zn(2+). Substrate is bound at residue tyrosine 124. Positions proline 125–threonine 248 constitute a Nudix hydrolase domain. Alanine 158, glutamate 174, and glutamate 178 together coordinate a divalent metal cation. A Nudix box motif is present at residues glycine 159–glycine 180. Glutamine 192–serine 199 provides a ligand contact to substrate. A divalent metal cation is bound at residue glutamate 219. Residue alanine 241 coordinates substrate.

The protein belongs to the Nudix hydrolase family. NudC subfamily. In terms of assembly, homodimer. Requires Mg(2+) as cofactor. Mn(2+) serves as cofactor. It depends on Zn(2+) as a cofactor.

It carries out the reaction a 5'-end NAD(+)-phospho-ribonucleoside in mRNA + H2O = a 5'-end phospho-adenosine-phospho-ribonucleoside in mRNA + beta-nicotinamide D-ribonucleotide + 2 H(+). It catalyses the reaction NAD(+) + H2O = beta-nicotinamide D-ribonucleotide + AMP + 2 H(+). The catalysed reaction is NADH + H2O = reduced beta-nicotinamide D-ribonucleotide + AMP + 2 H(+). Its function is as follows. mRNA decapping enzyme that specifically removes the nicotinamide adenine dinucleotide (NAD) cap from a subset of mRNAs by hydrolyzing the diphosphate linkage to produce nicotinamide mononucleotide (NMN) and 5' monophosphate mRNA. The NAD-cap is present at the 5'-end of some mRNAs and stabilizes RNA against 5'-processing. Has preference for mRNAs with a 5'-end purine. Catalyzes the hydrolysis of a broad range of dinucleotide pyrophosphates. In Salmonella dublin (strain CT_02021853), this protein is NAD-capped RNA hydrolase NudC.